Reading from the N-terminus, the 666-residue chain is Galactocerebrosidase (666 aa).

Positions 1–22 (MIYKLYFAIALCFSLCFDLCIA) are cleaved as a signal peptide. A substrate-binding site is contributed by Thr91. N-linked (GlcNAc...) asparagine glycosylation is present at Asn125. Substrate-binding residues include Trp133 and Asn179. Residue Glu180 is the Proton donor/acceptor of the active site. Glu256 (nucleophile) is an active-site residue. Cys269 and Cys376 are disulfide-bonded. Asn361 is a glycosylation site (N-linked (GlcNAc...) asparagine). Residue Arg378 coordinates substrate. Residues Asn385, Asn390, Asn500, and Asn540 are each glycosylated (N-linked (GlcNAc...) asparagine).

It belongs to the glycosyl hydrolase 59 family.

The protein localises to the lysosome. The enzyme catalyses a beta-D-galactosyl-(1&lt;-&gt;1')-N-acylsphing-4-enine + H2O = an N-acylsphing-4-enine + D-galactose. It catalyses the reaction beta-D-galactosyl-(1&lt;-&gt;1)-sphing-4-enine + H2O = sphing-4-enine + D-galactose. It carries out the reaction a D-galactosylceramide + H2O = an N-acyl-sphingoid base + D-galactose. Hydrolyzes the galactose ester bonds of glycolipids such as galactosylceramide and galactosylsphingosine. This chain is Galactocerebrosidase, found in Salmo salar (Atlantic salmon).